The following is a 142-amino-acid chain: Large ribosomal subunit protein uL13 (142 aa).

This sequence belongs to the universal ribosomal protein uL13 family. As to quaternary structure, part of the 50S ribosomal subunit.

This protein is one of the early assembly proteins of the 50S ribosomal subunit, although it is not seen to bind rRNA by itself. It is important during the early stages of 50S assembly. The polypeptide is Large ribosomal subunit protein uL13 (Ralstonia nicotianae (strain ATCC BAA-1114 / GMI1000) (Ralstonia solanacearum)).